Consider the following 437-residue polypeptide: Glutamyl-tRNA reductase (437 aa).

Substrate is bound by residues 46-49 (TCNR), S97, 102-104 (EEQ), and Q108. The Nucleophile role is filled by C47. 177–182 (GAGEMG) contributes to the NADP(+) binding site. The tract at residues 410-437 (NGRVSEGKDAKVEEGKPEVDVQRSKAES) is disordered. Residues 414–437 (SEGKDAKVEEGKPEVDVQRSKAES) show a composition bias toward basic and acidic residues.

Belongs to the glutamyl-tRNA reductase family. Homodimer.

It catalyses the reaction (S)-4-amino-5-oxopentanoate + tRNA(Glu) + NADP(+) = L-glutamyl-tRNA(Glu) + NADPH + H(+). It participates in porphyrin-containing compound metabolism; protoporphyrin-IX biosynthesis; 5-aminolevulinate from L-glutamyl-tRNA(Glu): step 1/2. Its function is as follows. Catalyzes the NADPH-dependent reduction of glutamyl-tRNA(Glu) to glutamate 1-semialdehyde (GSA). This chain is Glutamyl-tRNA reductase, found in Archaeoglobus fulgidus (strain ATCC 49558 / DSM 4304 / JCM 9628 / NBRC 100126 / VC-16).